Consider the following 559-residue polypeptide: Dihydroxy-acid dehydratase 2 (559 aa).

Residue Cys53 coordinates [2Fe-2S] cluster. Position 85 (Asp85) interacts with Mg(2+). Cys126 contributes to the [2Fe-2S] cluster binding site. Positions 127 and 128 each coordinate Mg(2+). Lys128 bears the N6-carboxylysine mark. Cys195 is a binding site for [2Fe-2S] cluster. Glu446 is a Mg(2+) binding site. Ser472 functions as the Proton acceptor in the catalytic mechanism.

The protein belongs to the IlvD/Edd family. In terms of assembly, homodimer. It depends on [2Fe-2S] cluster as a cofactor. Mg(2+) is required as a cofactor.

The enzyme catalyses (2R)-2,3-dihydroxy-3-methylbutanoate = 3-methyl-2-oxobutanoate + H2O. The catalysed reaction is (2R,3R)-2,3-dihydroxy-3-methylpentanoate = (S)-3-methyl-2-oxopentanoate + H2O. It functions in the pathway amino-acid biosynthesis; L-isoleucine biosynthesis; L-isoleucine from 2-oxobutanoate: step 3/4. The protein operates within amino-acid biosynthesis; L-valine biosynthesis; L-valine from pyruvate: step 3/4. Functions in the biosynthesis of branched-chain amino acids. Catalyzes the dehydration of (2R,3R)-2,3-dihydroxy-3-methylpentanoate (2,3-dihydroxy-3-methylvalerate) into 2-oxo-3-methylpentanoate (2-oxo-3-methylvalerate) and of (2R)-2,3-dihydroxy-3-methylbutanoate (2,3-dihydroxyisovalerate) into 2-oxo-3-methylbutanoate (2-oxoisovalerate), the penultimate precursor to L-isoleucine and L-valine, respectively. This Pseudoalteromonas translucida (strain TAC 125) protein is Dihydroxy-acid dehydratase 2.